A 493-amino-acid polypeptide reads, in one-letter code: Farnesoate epoxidase (493 aa).

The first 24 residues, 1–24 (MLALIVLCFILFFYIISRRHRGLC), serve as a signal peptide directing secretion. Cys433 contributes to the heme binding site.

The protein belongs to the cytochrome P450 family. It depends on heme as a cofactor. Constitutively expressed in corpora allata from the first instar larval to adult stages.

It catalyses the reaction (2E,6E)-farnesoate + reduced [NADPH--hemoprotein reductase] + O2 = juvenile hormone III carboxylate + oxidized [NADPH--hemoprotein reductase] + H2O + H(+). Functionally, catalyzes the conversion of farnesoate to juvenile hormone III acid in juvenile hormone biosynthesis. This is Farnesoate epoxidase from Bombyx mori (Silk moth).